A 906-amino-acid polypeptide reads, in one-letter code: Glutamate receptor 1 (906 aa).

The N-terminal stretch at 1-18 (MQHIFAFFCTGFLGAVVG) is a signal peptide. Residues 19–536 (ANFPNNIQIG…GVFSFLDPLA (518 aa)) are Extracellular-facing. 6 N-linked (GlcNAc...) asparagine glycosylation sites follow: asparagine 63, asparagine 249, asparagine 257, asparagine 363, asparagine 401, and asparagine 406. A disulfide bridge links cysteine 75 with cysteine 323. 3 residues coordinate L-glutamate: proline 492, threonine 494, and arginine 499. A helical transmembrane segment spans residues 537-557 (YEIWMCIVFAYIGVSVVLFLV). Topologically, residues 558–584 (SRFSPYEWHSEEFEEGRDQTTSDQSNE) are cytoplasmic. The segment at residues 585-600 (FGIFNSLWFSLGAFMQ) is an intramembrane region (helical; Pore-forming). The stretch at 601–603 (QGC) is an intramembrane region. Cysteine 603 carries the S-palmitoyl cysteine lipid modification. Residues 604-609 (DISPRS) lie on the Cytoplasmic side of the membrane. Residues 610-630 (LSGRIVGGVWWFFTLIIISSY) traverse the membrane as a helical segment. The Extracellular portion of the chain corresponds to 631–805 (TANLAAFLTV…DKTSALSLSN (175 aa)). Serine 645 carries the post-translational modification Phosphoserine. Residues serine 668 and threonine 669 each coordinate L-glutamate. Serine 710 bears the Phosphoserine mark. An L-glutamate-binding site is contributed by glutamate 719. Cysteines 732 and 787 form a disulfide. The helical transmembrane segment at 806–826 (VAGVFYILIGGLGLAMLVALI) threads the bilayer. At 827–906 (EFCYKSRSES…SGMPLGATGL (80 aa)) the chain is on the cytoplasmic side. Residue cysteine 829 is the site of S-palmitoyl cysteine attachment. Residues serine 849 and serine 863 each carry the phosphoserine modification. Positions 861-880 (RNSGAGASSGGSGENGRVVS) are disordered. A PDZ-binding motif is present at residues 903 to 906 (ATGL).

Belongs to the glutamate-gated ion channel (TC 1.A.10.1) family. GRIA1 subfamily. In terms of assembly, homotetramer or heterotetramer of pore-forming glutamate receptor subunits; heteromeric assembly can be the result of both receptor subtype and flip or flop form and according the composition, one partner can be dominant with respect to the fast desensitizing current component, whereas the other can determine the steady-state component. Tetramers may be formed by the dimerization of dimers. Found in a complex with GRIA2, GRIA3, GRIA4, CNIH2, CNIH3, CACNG2, CACNG3, CACNG4, CACNG5, CACNG7 and CACNG8. Interacts with HIP1 and RASGRF2. Interacts with SYNDIG1 and GRIA2. Interacts with DLG1 (via C-terminus). Interacts with LRFN1. Interacts with PRKG2. Interacts with CNIH2 and CACNG2. Interacts with CACNG5; this interaction modulates the gating. Interacts (via C-terminus) with PDLIM4 (via LIM domain); this interaction as well as the interaction of PDLIM4 with alpha-actinin is required for their colocalization in early endosomes. Interacts with SNX27 (via PDZ domain); the interaction is required for recycling to the plasma membrane when endocytosed and prevent degradation in lysosomes. Interacts (via PDZ-binding motif) with SHANK3 (via PDZ domain). Interacts with CACNG3; associates GRIA1 with the adapter protein complex 4 (AP-4) to target GRIA1 to the somatodendritic compartment of neurons. Interacts with CACNG2; this interaction mediates traffick to the plasma membrane and modulation of desensitization. Interacts with CNIH2 and CNIH3; this interaction promotes expression at the plasma membrane and extensively modulates their gating properties by slowing deactivation and desensitization kinetics. Found in a complex with GRIA2, GRIA3, GRIA4, DLG4, CACNG8 and CNIH2. In terms of processing, palmitoylated. Depalmitoylated by CPT1C and upon L-glutamate stimulation. ZDHHC3/GODZ specifically palmitoylates Cys-603, which leads to Golgi retention and decreased cell surface expression. In contrast, Cys-829 palmitoylation does not affect cell surface expression but regulates stimulation-dependent endocytosis. Phosphorylated at Ser-645. Phosphorylated at Ser-710 by PKC. Phosphorylated at Ser-849 by PKC, PKA and CAMK2. Phosphorylated at Ser-863 by PKC, PKA and PRKG2. Phosphorylation of Ser-863 is reduced by induction of long-term depression and increased by induction of long-term potentiation. In terms of tissue distribution, widely expressed in brain.

Its subcellular location is the cell membrane. It is found in the endoplasmic reticulum membrane. The protein localises to the postsynaptic cell membrane. The protein resides in the postsynaptic density membrane. It localises to the cell projection. Its subcellular location is the dendrite. It is found in the dendritic spine. The protein localises to the early endosome membrane. The protein resides in the recycling endosome membrane. It localises to the presynapse. Its subcellular location is the synapse. The catalysed reaction is Ca(2+)(in) = Ca(2+)(out). It carries out the reaction Na(+)(in) = Na(+)(out). The enzyme catalyses Mg(2+)(in) = Mg(2+)(out). It catalyses the reaction Li(+)(in) = Li(+)(out). The catalysed reaction is K(+)(in) = K(+)(out). It carries out the reaction Sr(2+)(in) = Sr(2+)(out). Functionally, ionotropic glutamate receptor that functions as a ligand-gated cation channel, gated by L-glutamate and glutamatergic agonists such as alpha-amino-3-hydroxy-5-methyl-4-isoxazolepropionic acid (AMPA), quisqualic acid, and kainic acid. L-glutamate acts as an excitatory neurotransmitter at many synapses in the central nervous system. Binding of the excitatory neurotransmitter L-glutamate induces a conformation change, leading to the opening of the cation channel, and thereby converts the chemical signal to an electrical impulse upon entry of monovalent and divalent cations such as sodium and calcium. The receptor then desensitizes rapidly and enters in a transient inactive state, characterized by the presence of bound agonist. In the presence of CACNG2 or CACNG4 or CACNG7 or CACNG8, shows resensitization which is characterized by a delayed accumulation of current flux upon continued application of L-glutamate. Resensitization is blocked by CNIH2 through interaction with CACNG8 in the CACNG8-containing AMPA receptors complex. Calcium (Ca(2+)) permeability depends on subunits composition and, heteromeric channels containing edited GRIA2 subunit are calcium-impermeable. Also permeable to other divalents cations such as strontium(2+) and magnesium(2+) and monovalent cations such as potassium(1+) and lithium(1+). This chain is Glutamate receptor 1, found in Homo sapiens (Human).